Reading from the N-terminus, the 873-residue chain is Probable beta-glucosidase A (873 aa).

Residues 1–19 (MRFGWLEVAALTAASVANA) form the signal peptide. 3 N-linked (GlcNAc...) asparagine glycosylation sites follow: Asn71, Asn222, and Asn263. Asp291 is a catalytic residue. N-linked (GlcNAc...) asparagine glycans are attached at residues Asn326, Asn333, Asn365, Asn453, Asn534, Asn553, Asn575, Asn679, and Asn725. Residues 730 to 765 (EDSSDDPNYGWEDSEYIPEGARDGSPQPLLKAGGAP) form a disordered region.

It belongs to the glycosyl hydrolase 3 family.

Its subcellular location is the secreted. The enzyme catalyses Hydrolysis of terminal, non-reducing beta-D-glucosyl residues with release of beta-D-glucose.. Its pathway is glycan metabolism; cellulose degradation. Its function is as follows. Beta-glucosidases are one of a number of cellulolytic enzymes involved in the degradation of cellulosic biomass. Catalyzes the last step releasing glucose from the inhibitory cellobiose. This chain is Probable beta-glucosidase A (bglA), found in Neosartorya fischeri (strain ATCC 1020 / DSM 3700 / CBS 544.65 / FGSC A1164 / JCM 1740 / NRRL 181 / WB 181) (Aspergillus fischerianus).